A 166-amino-acid chain; its full sequence is Bacterial non-heme ferritin (166 aa).

The 144-residue stretch at 2-145 folds into the Ferritin-like diiron domain; that stretch reads LSKNLLEALN…THINYLTRIG (144 aa). The Fe cation site is built by Glu-17, Glu-50, His-53, Glu-94, and Gln-127.

Belongs to the ferritin family. Prokaryotic subfamily.

It localises to the cytoplasm. It carries out the reaction 4 Fe(2+) + O2 + 6 H2O = 4 iron(III) oxide-hydroxide + 12 H(+). Functionally, iron-storage protein. The polypeptide is Bacterial non-heme ferritin (ftnA) (Staphylococcus aureus (strain USA300)).